The chain runs to 534 residues: CTP synthase (534 aa).

Residues M1–L267 are amidoligase domain. S13 contributes to the CTP binding site. S13 is a binding site for UTP. Residue S14–I19 coordinates ATP. Y54 is a binding site for L-glutamine. ATP is bound at residue D71. Mg(2+)-binding residues include D71 and E141. CTP-binding positions include D148 to E150, K188 to Q193, and K224. UTP-binding positions include K188–Q193 and K224. The 243-residue stretch at K292 to K534 folds into the Glutamine amidotransferase type-1 domain. Residue G354 coordinates L-glutamine. Catalysis depends on C381, which acts as the Nucleophile; for glutamine hydrolysis. L-glutamine is bound by residues L382–Q385, E405, and R463. Catalysis depends on residues H508 and E510.

The protein belongs to the CTP synthase family. In terms of assembly, homotetramer.

The catalysed reaction is UTP + L-glutamine + ATP + H2O = CTP + L-glutamate + ADP + phosphate + 2 H(+). It carries out the reaction L-glutamine + H2O = L-glutamate + NH4(+). It catalyses the reaction UTP + NH4(+) + ATP = CTP + ADP + phosphate + 2 H(+). It functions in the pathway pyrimidine metabolism; CTP biosynthesis via de novo pathway; CTP from UDP: step 2/2. With respect to regulation, allosterically activated by GTP, when glutamine is the substrate; GTP has no effect on the reaction when ammonia is the substrate. The allosteric effector GTP functions by stabilizing the protein conformation that binds the tetrahedral intermediate(s) formed during glutamine hydrolysis. Inhibited by the product CTP, via allosteric rather than competitive inhibition. Catalyzes the ATP-dependent amination of UTP to CTP with either L-glutamine or ammonia as the source of nitrogen. Regulates intracellular CTP levels through interactions with the four ribonucleotide triphosphates. The protein is CTP synthase of Streptococcus thermophilus (strain ATCC BAA-250 / LMG 18311).